The following is a 133-amino-acid chain: Putative redox protein FMP46, mitochondrial (133 aa).

The N-terminal 21 residues, M1–I21, are a transit peptide targeting the mitochondrion. The active site involves C97.

The protein belongs to the FMP46 family.

Its subcellular location is the mitochondrion. Putative mitochondrial redox protein which could be involved in the reduction of small toxic molecules. The protein is Putative redox protein FMP46, mitochondrial (FMP46) of Saccharomyces cerevisiae (strain ATCC 204508 / S288c) (Baker's yeast).